The following is a 204-amino-acid chain: Peroxynitrite isomerase (204 aa).

A GXWXGXG motif is present at residues 21–27; that stretch reads GEWEGSG. Histidine 195 provides a ligand contact to heme b.

This sequence belongs to the nitrobindin family. Homodimer. It depends on heme b as a cofactor.

The catalysed reaction is peroxynitrite = nitrate. It participates in nitrogen metabolism. Its function is as follows. Heme-binding protein able to scavenge peroxynitrite and to protect free L-tyrosine against peroxynitrite-mediated nitration, by acting as a peroxynitrite isomerase that converts peroxynitrite to nitrate. Therefore, this protein likely plays a role in peroxynitrite sensing and in the detoxification of reactive nitrogen and oxygen species (RNS and ROS, respectively). Is able to bind nitric oxide (NO) in vitro, but may act as a sensor of peroxynitrite levels in vivo. In Arthrobacter sp. (strain FB24), this protein is Peroxynitrite isomerase.